Reading from the N-terminus, the 185-residue chain is Crossover junction endodeoxyribonuclease RuvC (185 aa).

Residues aspartate 7, glutamate 68, and aspartate 141 contribute to the active site. 3 residues coordinate Mg(2+): aspartate 7, glutamate 68, and aspartate 141.

This sequence belongs to the RuvC family. In terms of assembly, homodimer which binds Holliday junction (HJ) DNA. The HJ becomes 2-fold symmetrical on binding to RuvC with unstacked arms; it has a different conformation from HJ DNA in complex with RuvA. In the full resolvosome a probable DNA-RuvA(4)-RuvB(12)-RuvC(2) complex forms which resolves the HJ. The cofactor is Mg(2+).

Its subcellular location is the cytoplasm. The enzyme catalyses Endonucleolytic cleavage at a junction such as a reciprocal single-stranded crossover between two homologous DNA duplexes (Holliday junction).. In terms of biological role, the RuvA-RuvB-RuvC complex processes Holliday junction (HJ) DNA during genetic recombination and DNA repair. Endonuclease that resolves HJ intermediates. Cleaves cruciform DNA by making single-stranded nicks across the HJ at symmetrical positions within the homologous arms, yielding a 5'-phosphate and a 3'-hydroxyl group; requires a central core of homology in the junction. The consensus cleavage sequence is 5'-(A/T)TT(C/G)-3'. Cleavage occurs on the 3'-side of the TT dinucleotide at the point of strand exchange. HJ branch migration catalyzed by RuvA-RuvB allows RuvC to scan DNA until it finds its consensus sequence, where it cleaves and resolves the cruciform DNA. The sequence is that of Crossover junction endodeoxyribonuclease RuvC from Mycolicibacterium smegmatis (strain ATCC 700084 / mc(2)155) (Mycobacterium smegmatis).